Reading from the N-terminus, the 492-residue chain is Phenylalanine--tRNA ligase alpha subunit (492 aa).

L-phenylalanine-binding positions include Thr-335, 374 to 376, and Tyr-414; that span reads QLE. Glu-416 contacts Mg(2+). Residue Phe-439 participates in L-phenylalanine binding.

Belongs to the class-II aminoacyl-tRNA synthetase family. Phe-tRNA synthetase alpha subunit type 2 subfamily. As to quaternary structure, tetramer of two alpha and two beta subunits. Mg(2+) serves as cofactor.

It localises to the cytoplasm. It catalyses the reaction tRNA(Phe) + L-phenylalanine + ATP = L-phenylalanyl-tRNA(Phe) + AMP + diphosphate + H(+). This Methanosarcina acetivorans (strain ATCC 35395 / DSM 2834 / JCM 12185 / C2A) protein is Phenylalanine--tRNA ligase alpha subunit.